The sequence spans 350 residues: Methylthioribose-1-phosphate isomerase (350 aa).

Substrate-binding positions include 48 to 50 (RGA), Arg-93, and Gln-198. Asp-239 functions as the Proton donor in the catalytic mechanism. Position 249–250 (249–250 (NK)) interacts with substrate.

This sequence belongs to the eIF-2B alpha/beta/delta subunits family. MtnA subfamily.

The enzyme catalyses 5-(methylsulfanyl)-alpha-D-ribose 1-phosphate = 5-(methylsulfanyl)-D-ribulose 1-phosphate. It participates in amino-acid biosynthesis; L-methionine biosynthesis via salvage pathway; L-methionine from S-methyl-5-thio-alpha-D-ribose 1-phosphate: step 1/6. In terms of biological role, catalyzes the interconversion of methylthioribose-1-phosphate (MTR-1-P) into methylthioribulose-1-phosphate (MTRu-1-P). In Fervidobacterium nodosum (strain ATCC 35602 / DSM 5306 / Rt17-B1), this protein is Methylthioribose-1-phosphate isomerase.